The sequence spans 894 residues: DNA mismatch repair protein MutS (894 aa).

632-639 (GPNMGGKS) provides a ligand contact to ATP.

It belongs to the DNA mismatch repair MutS family.

In terms of biological role, this protein is involved in the repair of mismatches in DNA. It is possible that it carries out the mismatch recognition step. This protein has a weak ATPase activity. The polypeptide is DNA mismatch repair protein MutS (Paraburkholderia phytofirmans (strain DSM 17436 / LMG 22146 / PsJN) (Burkholderia phytofirmans)).